The following is a 315-amino-acid chain: MSEEKKQWSISDIEAIYQQPFNDLLYQAHAIHRTYHDPNSLQFATLLSIKTGACPEDCGYCSQSGHYKTHVEKEKLMSVEEVLQCAKEAKEGGAKRFCMGAAWRCPPDKAIPQLKEMIEGVKSLGLETCMTLGMLTKEQASHLKEAGLDYYNHNIDTSPSYYDKVVTTRKFSDRLDTLNNVRSAGINVCCGGILGLGETREDRIEFLLTLANMETPPESVPINRLIPVEGTPLAQAERVEGIELVRTIATARILMPKSAIRLTAGRTEMSDELQALCYFAGANSVFIGDKLLTEDNPQRFKDKTLFNKLGLTEMV.

The region spanning 39-266 is the Radical SAM core domain; sequence NSLQFATLLS…KSAIRLTAGR (228 aa). [4Fe-4S] cluster-binding residues include Cys54, Cys58, and Cys61. 4 residues coordinate [2Fe-2S] cluster: Cys98, Cys129, Cys189, and Arg261.

Belongs to the radical SAM superfamily. Biotin synthase family. As to quaternary structure, homodimer. It depends on [4Fe-4S] cluster as a cofactor. Requires [2Fe-2S] cluster as cofactor.

It carries out the reaction (4R,5S)-dethiobiotin + (sulfur carrier)-SH + 2 reduced [2Fe-2S]-[ferredoxin] + 2 S-adenosyl-L-methionine = (sulfur carrier)-H + biotin + 2 5'-deoxyadenosine + 2 L-methionine + 2 oxidized [2Fe-2S]-[ferredoxin]. Its pathway is cofactor biosynthesis; biotin biosynthesis; biotin from 7,8-diaminononanoate: step 2/2. In terms of biological role, catalyzes the conversion of dethiobiotin (DTB) to biotin by the insertion of a sulfur atom into dethiobiotin via a radical-based mechanism. This Legionella pneumophila (strain Lens) protein is Biotin synthase.